We begin with the raw amino-acid sequence, 269 residues long: 5'-nucleotidase SurE (269 aa).

A divalent metal cation contacts are provided by aspartate 11, aspartate 12, serine 42, and asparagine 90.

This sequence belongs to the SurE nucleotidase family. Requires a divalent metal cation as cofactor.

It localises to the cytoplasm. It carries out the reaction a ribonucleoside 5'-phosphate + H2O = a ribonucleoside + phosphate. Nucleotidase that shows phosphatase activity on nucleoside 5'-monophosphates. In Haloarcula marismortui (strain ATCC 43049 / DSM 3752 / JCM 8966 / VKM B-1809) (Halobacterium marismortui), this protein is 5'-nucleotidase SurE.